The following is a 640-amino-acid chain: 1,4-alpha-glucan branching enzyme GlgB (640 aa).

Catalysis depends on D318, which acts as the Nucleophile. The active-site Proton donor is the E371.

This sequence belongs to the glycosyl hydrolase 13 family. GlgB subfamily. Monomer.

The catalysed reaction is Transfers a segment of a (1-&gt;4)-alpha-D-glucan chain to a primary hydroxy group in a similar glucan chain.. It functions in the pathway glycan biosynthesis; glycogen biosynthesis. In terms of biological role, catalyzes the formation of the alpha-1,6-glucosidic linkages in glycogen by scission of a 1,4-alpha-linked oligosaccharide from growing alpha-1,4-glucan chains and the subsequent attachment of the oligosaccharide to the alpha-1,6 position. This is 1,4-alpha-glucan branching enzyme GlgB from Francisella philomiragia subsp. philomiragia (strain ATCC 25017 / CCUG 19701 / FSC 153 / O#319-036).